Consider the following 402-residue polypeptide: Protein HAIKU1 (402 aa).

Disordered regions lie at residues 1 to 44 (MDRP…LQTQ), 63 to 135 (TGSP…QQPM), 160 to 266 (SSLG…LVPS), and 346 to 402 (QPLT…WNDY). Residues 24 to 44 (LHQSTFAASTSNGAAPRLQTQ) are compositionally biased toward polar residues. The short motif at 55 to 64 (FRSIVQQLTG) is the VQ element. A compositionally biased stretch (polar residues) spans 76-87 (QNNSLRPQNTRL). The segment covering 103–113 (VPLPSMAPPQS) has biased composition (pro residues). A compositionally biased stretch (polar residues) spans 160–173 (SSLGDSGPNANQMQ). Residues 218–240 (MPAQSQSQSQPQPQPQPQQHMMP) show a composition bias toward low complexity. Residues 257-266 (YLPPPGLVPS) show a composition bias toward pro residues. Residues 349 to 358 (TPNFSFSQIA) are compositionally biased toward polar residues. Positions 371 to 380 (QGPPQPPPSP) are enriched in pro residues. A compositionally biased stretch (low complexity) spans 381 to 390 (GLMFPLSPSG).

In terms of assembly, interacts with WRKY10. Interacts with MPK6.

The protein localises to the nucleus. Its function is as follows. Modulates seed size by negatively regulating the cellularization of syncytial endosperm. May function by binding and modulating the activity of WRKY10 transcription factor. The chain is Protein HAIKU1 from Arabidopsis thaliana (Mouse-ear cress).